A 1444-amino-acid chain; its full sequence is DNA polymerase III PolC-type (1444 aa).

Positions 421–577 (YVVFDVETTG…ADAEATGYLL (157 aa)) constitute an Exonuclease domain.

This sequence belongs to the DNA polymerase type-C family. PolC subfamily.

It is found in the cytoplasm. It carries out the reaction DNA(n) + a 2'-deoxyribonucleoside 5'-triphosphate = DNA(n+1) + diphosphate. Required for replicative DNA synthesis. This DNA polymerase also exhibits 3' to 5' exonuclease activity. This is DNA polymerase III PolC-type from Lacticaseibacillus paracasei (strain ATCC 334 / BCRC 17002 / CCUG 31169 / CIP 107868 / KCTC 3260 / NRRL B-441) (Lactobacillus paracasei).